The following is a 524-amino-acid chain: Cysteine--tRNA ligase (524 aa).

Cysteine 29 is a binding site for Zn(2+). A 'HIGH' region motif is present at residues 31-41; the sequence is PTVQAAPHVGH. Zn(2+) is bound by residues cysteine 207, histidine 232, and glutamate 236. The span at 246–258 shows a compositional bias: low complexity; that stretch reads ARPASNAASADSP. Residues 246-273 are disordered; it reads ARPASNAASADSPGPGGGEPGGGEPSSG. Residues 259–270 show a composition bias toward gly residues; sequence GPGGGEPGGGEP. A 'KMSKS' region motif is present at residues 291–295; it reads KMSKS. Lysine 294 lines the ATP pocket.

The protein belongs to the class-I aminoacyl-tRNA synthetase family. In terms of assembly, monomer. The cofactor is Zn(2+).

The protein localises to the cytoplasm. The catalysed reaction is tRNA(Cys) + L-cysteine + ATP = L-cysteinyl-tRNA(Cys) + AMP + diphosphate. This is Cysteine--tRNA ligase from Frankia casuarinae (strain DSM 45818 / CECT 9043 / HFP020203 / CcI3).